The sequence spans 230 residues: Ion-translocating oxidoreductase complex subunit E (230 aa).

A run of 6 helical transmembrane segments spans residues 18–38, 39–59, 63–83, 86–106, 125–145, and 182–202; these read ALVQ…ATNA, LGLG…ISAL, TPAE…VSAV, LINA…PLIV, ALSA…MFVL, and PFLL…MLAV.

The protein belongs to the NqrDE/RnfAE family. As to quaternary structure, the complex is composed of six subunits: RnfA, RnfB, RnfC, RnfD, RnfE and RnfG.

It is found in the cell inner membrane. In terms of biological role, part of a membrane-bound complex that couples electron transfer with translocation of ions across the membrane. This chain is Ion-translocating oxidoreductase complex subunit E, found in Citrobacter koseri (strain ATCC BAA-895 / CDC 4225-83 / SGSC4696).